The primary structure comprises 206 residues: Heat shock protein beta-1 (206 aa).

Omega-N-methylarginine is present on arginine 12. Position 13 is a phosphoserine (serine 13). A Phosphoserine; by MAPKAPK2 and MAPKAPK3 modification is found at serine 15. Residue serine 27 is modified to Phosphoserine. Residues 74–206 (RPAFSRALNR…GPESEQSGAK (133 aa)) form an interaction with TGFB1I1 region. The sHSP domain occupies 80–188 (ALNRQLSSGV…QSAEITIPVT (109 aa)). Serine 86 carries the phosphoserine; by MAPKAPK2, MAPKAPK3 and MAPKAPK5 modification. A phosphoserine mark is found at serine 87, serine 90, and serine 102. Lysine 127 is modified (N6-acetyllysine). Position 178 is a phosphothreonine (threonine 178). Serine 180 and serine 200 each carry phosphoserine.

The protein belongs to the small heat shock protein (HSP20) family. In terms of assembly, homooligomer. Homodimer; becomes monomeric upon activation. Heterooligomer; with HSPB6. Associates with alpha- and beta-tubulin. Interacts with TGFB1I1. Interacts with CRYAB. Interacts with HSPB8. Interacts with HSPBAP1. Post-translationally, phosphorylated upon exposure to protein kinase C activators and heat shock. Phosphorylation by MAPKAPK2 and MAPKAPK3 in response to stress dissociates HSPB1 from large small heat-shock protein (sHsps) oligomers and impairs its chaperone activity and ability to protect against oxidative stress effectively. Phosphorylation by MAPKAPK5 in response to PKA stimulation induces F-actin rearrangement. Expressed in a variety of tissues. High levels in lung, adrenal, xiphoid, adipose tissue, heart and striated and smooth muscle, lower levels in the CNS. Adult levels are much higher in the slow-twitch soleus muscle than in the fast-twitch rectus femoris and extensor digitorum muscles.

The protein resides in the cytoplasm. The protein localises to the nucleus. It is found in the cytoskeleton. Its subcellular location is the spindle. Functionally, small heat shock protein which functions as a molecular chaperone probably maintaining denatured proteins in a folding-competent state. Plays a role in stress resistance and actin organization. Through its molecular chaperone activity may regulate numerous biological processes including the phosphorylation and the axonal transport of neurofilament proteins. The sequence is that of Heat shock protein beta-1 (Hspb1) from Rattus norvegicus (Rat).